The chain runs to 419 residues: Queuine tRNA-ribosyltransferase accessory subunit 2 (419 aa).

4 residues coordinate Zn(2+): cysteine 326, cysteine 328, cysteine 331, and histidine 357.

This sequence belongs to the queuine tRNA-ribosyltransferase family. QTRT2 subfamily. In terms of assembly, heterodimer of a catalytic subunit and an accessory subunit. It depends on Zn(2+) as a cofactor.

It localises to the cytoplasm. In terms of biological role, non-catalytic subunit of the queuine tRNA-ribosyltransferase (TGT) that catalyzes the base-exchange of a guanine (G) residue with queuine (Q) at position 34 (anticodon wobble position) in tRNAs with GU(N) anticodons (tRNA-Asp, -Asn, -His and -Tyr), resulting in the hypermodified nucleoside queuosine (7-(((4,5-cis-dihydroxy-2-cyclopenten-1-yl)amino)methyl)-7-deazaguanosine). The chain is Queuine tRNA-ribosyltransferase accessory subunit 2 from Drosophila grimshawi (Hawaiian fruit fly).